Here is a 250-residue protein sequence, read N- to C-terminus: GTP cyclohydrolase 1 (250 aa).

Composition is skewed to basic and acidic residues over residues 1–14 and 35–44; these read MEKG…EKPR and PAEKPPRPEA. The disordered stretch occupies residues 1–64; it reads MEKGPVRAPA…GERPRSEEDN (64 aa). Phosphoserine occurs at positions 60 and 81. The Zn(2+) site is built by cysteine 141, histidine 144, and cysteine 212.

Belongs to the GTP cyclohydrolase I family. In terms of assembly, toroid-shaped homodecamer, composed of a dimer of pentamers. The inactive isoforms also form decamers and may possibly be incorporated into GCH1 heterodecamers, decreasing enzyme stability and activity. Interacts with AHSA1 and GCHFR/GFRP. Post-translationally, phosphorylated by casein kinase II at Ser-81 in HAECs during oscillatory shear stress; phosphorylation at Ser-81 results in increased enzyme activity. In terms of tissue distribution, in epidermis, expressed predominantly in basal undifferentiated keratinocytes and in some but not all melanocytes (at protein level).

The protein resides in the cytoplasm. It is found in the nucleus. The catalysed reaction is GTP + H2O = 7,8-dihydroneopterin 3'-triphosphate + formate + H(+). It functions in the pathway cofactor biosynthesis; 7,8-dihydroneopterin triphosphate biosynthesis; 7,8-dihydroneopterin triphosphate from GTP: step 1/1. GTP shows a positive allosteric effect, and tetrahydrobiopterin inhibits the enzyme activity. Zinc is required for catalytic activity. Inhibited by Mg(2+). Functionally, positively regulates nitric oxide synthesis in umbilical vein endothelial cells (HUVECs). May be involved in dopamine synthesis. May modify pain sensitivity and persistence. Isoform GCH-1 is the functional enzyme, the potential function of the enzymatically inactive isoforms remains unknown. This chain is GTP cyclohydrolase 1 (GCH1), found in Homo sapiens (Human).